A 1562-amino-acid chain; its full sequence is Neuralized-like protein 4 (1562 aa).

Gly residues predominate over residues 1–42; it reads MAAGSGGSGGSGGGPGPGPGGGGGPSGSGSGPGSNGGLGSGG. Disordered stretches follow at residues 1 to 48 and 207 to 236; these read MAAG…HPRT and PEPGFSPPTPIPTPPLEPLAPTEDSALAEQ. 2 NHR domains span residues 41-207 and 317-484; these read GGEL…VLPP and ALLF…IVHN. The span at 207 to 224 shows a compositional bias: pro residues; it reads PEPGFSPPTPIPTPPLEP. Ser-502 bears the Phosphoserine mark. NHR domains are found at residues 520 to 686 and 716 to 884; these read RLLF…IVDD and DLRF…ITNA. The segment at 691-716 is disordered; sequence PVPEPLPEGNNQVSPSSPSSGAGGSD. Ser-907 is modified (phosphoserine). The region spanning 913 to 1086 is the NHR 5 domain; the sequence is AHRFHSTCGK…PVRGVSIVSS (174 aa). Residues 1086 to 1123 are disordered; that stretch reads STRLEESEGTQPPSPSSDTGSEGEEDDEGEEHGLGGQN. Positions 1106–1115 are enriched in acidic residues; that stretch reads SEGEEDDEGE. The region spanning 1131–1294 is the NHR 6 domain; sequence TLEFLENHGK…QCEQVTIVNP (164 aa).

In terms of assembly, interacts with CCP110; this interaction propmotes CCP110 ubiquitination and degradation via the proteasome pathway. Via its interaction with CCP110, may indirectly interact with CEP97. Interacts with the E3 ubiquitin-protein ligase HERC2 and UBE3A. May interact with MAPK6 and hence mediate MAPK6 interaction with UBE3A. Interaction with UBE3A may be indirect and mediated by HERC2. Ubiquitinated; undergoes HERC2-dependent 'Lys-48' ubiquitination. This ubiquitination leads to proteasomal degradation. Widely expressed at high levels (including brain).

The protein localises to the cytoplasm. It localises to the cytoskeleton. The protein resides in the microtubule organizing center. Its subcellular location is the centrosome. It is found in the centriole. Its function is as follows. Promotes CCP110 ubiquitination and proteasome-dependent degradation. By counteracting accumulation of CP110, maintains normal centriolar homeostasis and preventing formation of ectopic microtubular organizing centers. The sequence is that of Neuralized-like protein 4 (NEURL4) from Homo sapiens (Human).